The sequence spans 437 residues: Enolase (437 aa).

Glutamine 162 lines the (2R)-2-phosphoglycerate pocket. Glutamate 204 acts as the Proton donor in catalysis. Aspartate 251, glutamate 297, and aspartate 324 together coordinate Mg(2+). Residues lysine 349, arginine 378, serine 379, and lysine 400 each contribute to the (2R)-2-phosphoglycerate site. Residue lysine 349 is the Proton acceptor of the active site.

The protein belongs to the enolase family. The cofactor is Mg(2+).

The protein resides in the cytoplasm. It is found in the secreted. It localises to the cell surface. The enzyme catalyses (2R)-2-phosphoglycerate = phosphoenolpyruvate + H2O. It functions in the pathway carbohydrate degradation; glycolysis; pyruvate from D-glyceraldehyde 3-phosphate: step 4/5. In terms of biological role, catalyzes the reversible conversion of 2-phosphoglycerate (2-PG) into phosphoenolpyruvate (PEP). It is essential for the degradation of carbohydrates via glycolysis. The sequence is that of Enolase from Prosthecochloris aestuarii (strain DSM 271 / SK 413).